The primary structure comprises 320 residues: Malate dehydrogenase (320 aa).

Residues 10-15 (GSGMIG) and D34 each bind NAD(+). The substrate site is built by R83 and R89. NAD(+) contacts are provided by residues N96 and 119–121 (ITN). The substrate site is built by N121 and R152. Residue H176 is the Proton acceptor of the active site.

It belongs to the LDH/MDH superfamily. MDH type 3 family.

It carries out the reaction (S)-malate + NAD(+) = oxaloacetate + NADH + H(+). Functionally, catalyzes the reversible oxidation of malate to oxaloacetate. The chain is Malate dehydrogenase from Hyphomonas neptunium (strain ATCC 15444).